Consider the following 574-residue polypeptide: Arginine--tRNA ligase (574 aa).

Positions proline 121 to histidine 131 match the 'HIGH' region motif.

Belongs to the class-I aminoacyl-tRNA synthetase family. In terms of assembly, monomer.

The protein resides in the cytoplasm. It catalyses the reaction tRNA(Arg) + L-arginine + ATP = L-arginyl-tRNA(Arg) + AMP + diphosphate. The sequence is that of Arginine--tRNA ligase from Buchnera aphidicola subsp. Acyrthosiphon pisum (strain Tuc7).